We begin with the raw amino-acid sequence, 256 residues long: Lysine-rich coiled-coil protein 1 (256 aa).

2 disordered regions span residues R62–V84 and T144–F256. Over residues P64–Q79 the composition is skewed to polar residues. Composition is skewed to basic and acidic residues over residues H161–K188 and K218–E227. A coiled-coil region spans residues E209–M247.

This Mus musculus (Mouse) protein is Lysine-rich coiled-coil protein 1 (Krcc1).